We begin with the raw amino-acid sequence, 461 residues long: Peptidyl-prolyl cis-trans isomerase-like 4 (461 aa).

The PPIase cyclophilin-type domain maps to 1 to 171 (MSVLLETSLG…KDIRIRHTVI (171 aa)). An RRM domain is found at 248–326 (NVLFVCKLNP…HRIHVDFSQS (79 aa)). The tract at residues 372-461 (NYNMVFDKND…DDRYRDRRRR (90 aa)) is disordered. Composition is skewed to basic and acidic residues over residues 378 to 392 (DKND…ERSY) and 400 to 461 (NYRD…RRRR).

This sequence belongs to the cyclophilin-type PPIase family. PPIL4 subfamily.

It is found in the nucleus. It carries out the reaction [protein]-peptidylproline (omega=180) = [protein]-peptidylproline (omega=0). Functionally, PPIases accelerate the folding of proteins. It catalyzes the cis-trans isomerization of proline imidic peptide bonds in oligopeptides. The sequence is that of Peptidyl-prolyl cis-trans isomerase-like 4 (cyp6) from Emericella nidulans (strain FGSC A4 / ATCC 38163 / CBS 112.46 / NRRL 194 / M139) (Aspergillus nidulans).